The primary structure comprises 279 residues: Undecaprenyl-diphosphatase (279 aa).

Helical transmembrane passes span 2-22 (LIIELLKAIFFGIIEGITEWL), 44-64 (AFIEMFNIVIQLGAIIAVMLI), 85-105 (WQLWLKVVIACIPSILIAVPL), 113-133 (FYFMVPIAIALIVYGIAFIWI), 163-183 (VLSIVPGTSRSGATILGAIIL), 188-208 (TVAADFTFFLAIPTMFGYSGL), 223-243 (AQVLILLVASLTAFVVSLLAI), and 255-275 (FTIFGKYRIVLGSLLLIYSFF).

This sequence belongs to the UppP family.

Its subcellular location is the cell membrane. It carries out the reaction di-trans,octa-cis-undecaprenyl diphosphate + H2O = di-trans,octa-cis-undecaprenyl phosphate + phosphate + H(+). In terms of biological role, catalyzes the dephosphorylation of undecaprenyl diphosphate (UPP). Confers resistance to bacitracin. This Streptococcus pyogenes serotype M28 (strain MGAS6180) protein is Undecaprenyl-diphosphatase.